We begin with the raw amino-acid sequence, 283 residues long: Acyl-coenzyme A diphosphatase FITM2 (283 aa).

Positions 1-11 are enriched in low complexity; that stretch reads MSTRRSSTRAD. Positions 1 to 21 are disordered; it reads MSTRRSSTRADSTTKRPASPN. Residues 1–39 lie on the Cytoplasmic side of the membrane; the sequence is MSTRRSSTRADSTTKRPASPNSTPNAALGIFVAIARQIL. The chain crosses the membrane as a helical span at residues 40–60; sequence FIDARKVALFYLAFVTVLSFI. The Lumenal segment spans residues 61–81; that stretch reads ESRIELDSTYYLVQKHSVLNQ. A helical membrane pass occupies residues 82–102; it reads YGVKMGWFWTLVIVGPFIWFS. The Cytoplasmic segment spans residues 103-120; the sequence is SKAHNRRDRDQPIVDVCR. The helical transmembrane segment at 121–141 threads the bilayer; it reads LGVGTACWYFSVQFFHKVLAL. Residues 142-168 are Lumenal-facing; the sequence is TSMCDKGRTLTRAQCSEKEGVWTPGYD. A helical membrane pass occupies residues 169–189; sequence ISGHCFLMIYSILIITEEAIA. Residue His172 is part of the active site. Residues 190–219 are Cytoplasmic-facing; that stretch reads YRHYQQVTDAVHQMDGDREEHDRLTRCIQY. The next 2 membrane-spanning stretches (helical) occupy residues 220–240 and 241–261; these read FFVA…ISVL and YYHI…CWFV. His243 is a catalytic residue. Over 262 to 283 the chain is Cytoplasmic; the sequence is TYRMLYPAGFLASPIRRTVGRK.

This sequence belongs to the FIT family. FIT2 subfamily.

It is found in the endoplasmic reticulum membrane. It carries out the reaction an acyl-CoA + H2O = an acyl-4'-phosphopantetheine + adenosine 3',5'-bisphosphate + 2 H(+). Its function is as follows. Fatty acyl-coenzyme A (CoA) diphosphatase that hydrolyzes fatty acyl-CoA to yield acyl-4'-phosphopantetheine and adenosine 3',5'-bisphosphate. Preferentially hydrolyzes unsaturated long-chain acyl-CoA substrates in the endoplasmic reticulum (ER) lumen. This catalytic activity is required for maintaining ER structure and for lipid droplets (LDs) biogenesis, which are lipid storage organelles involved in maintaining lipid and energy homeostasis. May directly bind to diacylglycerol (DAGs) and triacylglycerol, which is also important for LD biogenesis. May support directional budding of nacent LDs from the ER into the cytosol by reducing DAG levels at sites of LD formation. May play a role in the regulation of cell morphology, ER morphology and cytoskeletal organization. The chain is Acyl-coenzyme A diphosphatase FITM2 from Caenorhabditis elegans.